The primary structure comprises 307 residues: Putative S-adenosyl-L-methionine-dependent methyltransferase Mflv_5023 (307 aa).

S-adenosyl-L-methionine contacts are provided by residues D133 and 162-163; that span reads DL. Residues 213-234 are disordered; sequence SRLAVESVPSQQSADQDEMREK.

Belongs to the UPF0677 family.

Its function is as follows. Exhibits S-adenosyl-L-methionine-dependent methyltransferase activity. The sequence is that of Putative S-adenosyl-L-methionine-dependent methyltransferase Mflv_5023 from Mycolicibacterium gilvum (strain PYR-GCK) (Mycobacterium gilvum (strain PYR-GCK)).